The following is a 250-amino-acid chain: Lymphocyte function-associated antigen 3 (250 aa).

A signal peptide spans 1-28; it reads MVAGSDAGRALGVLSVVCLLHCFGFISC. Residues 29 to 215 lie on the Extracellular side of the membrane; the sequence is FSQQIYGVVY…IPSSGHSRHR (187 aa). An Ig-like domain is found at 30–121; that stretch reads SQQIYGVVYG…DTMKFFLYVL (92 aa). Asn40, Asn94, Asn109, Asn135, Asn169, and Asn195 each carry an N-linked (GlcNAc...) asparagine glycan. Cysteines 142 and 187 form a disulfide. A helical transmembrane segment spans residues 216 to 238; sequence YALIPIPLAVITTCIVLYMNGIL. At 239–250 the chain is on the cytoplasmic side; that stretch reads KCDRKPDRTNSN.

In terms of assembly, interacts with CD2. Interacts with CMTM6. As to quaternary structure, (Microbial infection) Interacts with human cytomegalovirus protein UL148; this interaction retains immature CD58 intracellularly.

Its subcellular location is the cell membrane. Its function is as follows. Ligand of the T-lymphocyte CD2 glycoprotein. This interaction is important in mediating thymocyte interactions with thymic epithelial cells, antigen-independent and -dependent interactions of T-lymphocytes with target cells and antigen-presenting cells and the T-lymphocyte rosetting with erythrocytes. In addition, the LFA-3/CD2 interaction may prime response by both the CD2+ and LFA-3+ cells. The protein is Lymphocyte function-associated antigen 3 (CD58) of Homo sapiens (Human).